The sequence spans 208 residues: Protein-L-isoaspartate O-methyltransferase (208 aa).

S59 is a catalytic residue.

It belongs to the methyltransferase superfamily. L-isoaspartyl/D-aspartyl protein methyltransferase family.

The protein resides in the cytoplasm. The enzyme catalyses [protein]-L-isoaspartate + S-adenosyl-L-methionine = [protein]-L-isoaspartate alpha-methyl ester + S-adenosyl-L-homocysteine. Catalyzes the methyl esterification of L-isoaspartyl residues in peptides and proteins that result from spontaneous decomposition of normal L-aspartyl and L-asparaginyl residues. It plays a role in the repair and/or degradation of damaged proteins. This Serratia proteamaculans (strain 568) protein is Protein-L-isoaspartate O-methyltransferase.